A 263-amino-acid chain; its full sequence is 3-deoxy-manno-octulosonate cytidylyltransferase (263 aa).

Belongs to the KdsB family.

Its subcellular location is the cytoplasm. It catalyses the reaction 3-deoxy-alpha-D-manno-oct-2-ulosonate + CTP = CMP-3-deoxy-beta-D-manno-octulosonate + diphosphate. It participates in nucleotide-sugar biosynthesis; CMP-3-deoxy-D-manno-octulosonate biosynthesis; CMP-3-deoxy-D-manno-octulosonate from 3-deoxy-D-manno-octulosonate and CTP: step 1/1. The protein operates within bacterial outer membrane biogenesis; lipopolysaccharide biosynthesis. Activates KDO (a required 8-carbon sugar) for incorporation into bacterial lipopolysaccharide in Gram-negative bacteria. This is 3-deoxy-manno-octulosonate cytidylyltransferase from Burkholderia thailandensis (strain ATCC 700388 / DSM 13276 / CCUG 48851 / CIP 106301 / E264).